We begin with the raw amino-acid sequence, 237 residues long: MALSPPKIFVEDRQVPLDATSDPPALFDGTTRLYISYTCPFAQRVWITRNLKGLQDEIKLVPIDLPNRPAWLKEKVNPANKVPALEHNGKITGESLDLIKYVDSNFDGPSLYPEDSAKREFGEELLKYVDETFVKTVFGSFKGDPVKETASAFDHVENALKKFDDGPFFLGELSLVDIAYIPFIERFQVFLDEVFKYEIIIGRPNLAAWIEQMNKMVAYTQTKTDSEYVVNYFKRFM.

Residues 29-110 form the GST N-terminal domain; the sequence is GTTRLYISYT…YVDSNFDGPS (82 aa). Residues 39-40, 67-68, 81-82, and 94-95 each bind glutathione; these read CP, NR, KV, and ES. The region spanning 112-232 is the GST C-terminal domain; sequence YPEDSAKREF…KTDSEYVVNY (121 aa).

This sequence belongs to the GST superfamily. Lambda family.

Its subcellular location is the cytoplasm. It localises to the cytosol. The enzyme catalyses RX + glutathione = an S-substituted glutathione + a halide anion + H(+). In terms of biological role, catalyzes the glutathione-dependent reduction of S-glutathionylquercetin to quercetin. In vitro, possesses glutathione-dependent thiol transferase activity toward 2-hydroxyethyl disulfide (HED). This chain is Glutathione S-transferase L1 (GSTL1), found in Arabidopsis thaliana (Mouse-ear cress).